Reading from the N-terminus, the 175-residue chain is Glycine-rich RNA-binding protein 1 (175 aa).

The RRM domain maps to 3-81 (AKVYVGNLSW…RRIRVNMANS (79 aa)). A disordered region spans residues 114–175 (GQPGGFQQPG…GYGGYNGQSQ (62 aa)). The segment covering 122-131 (PGGFQQQGGY) has biased composition (low complexity). The segment covering 132 to 141 (PQQGGYGGYQ) has biased composition (gly residues). The segment covering 142–162 (QPGFQPQQGGYGAPQQGYGAP) has biased composition (low complexity). Residues 163–175 (QQGGYGGYNGQSQ) are compositionally biased toward gly residues.

The protein belongs to the glycine-rich RNA-binding protein family. As to quaternary structure, part of large ribonucleoprotein complexes (mRNPs) containing RNA-binding proteins RRM4 and PAB1, endosome-binding protein UPA1, core scaffold protein UPA2 and associated factor GRP1.

It localises to the endosome. Functionally, component of endosomal mRNA transport that regulates polarity of the infectious hyphae by transporting a broad spectrum of cargo mRNAs from the nucleus to cell poles. This is Glycine-rich RNA-binding protein 1 from Mycosarcoma maydis (Corn smut fungus).